The following is a 288-amino-acid chain: Pantothenate synthetase (288 aa).

35–42 (MGALHDGH) contributes to the ATP binding site. His42 acts as the Proton donor in catalysis. (R)-pantoate is bound at residue Gln66. Gln66 contacts beta-alanine. ATP is bound at residue 152 to 155 (GEKD). Gln158 is a binding site for (R)-pantoate. ATP-binding positions include Gly181 and 189-192 (LSSR).

It belongs to the pantothenate synthetase family. In terms of assembly, homodimer.

Its subcellular location is the cytoplasm. The catalysed reaction is (R)-pantoate + beta-alanine + ATP = (R)-pantothenate + AMP + diphosphate + H(+). The protein operates within cofactor biosynthesis; (R)-pantothenate biosynthesis; (R)-pantothenate from (R)-pantoate and beta-alanine: step 1/1. Catalyzes the condensation of pantoate with beta-alanine in an ATP-dependent reaction via a pantoyl-adenylate intermediate. In Maricaulis maris (strain MCS10) (Caulobacter maris), this protein is Pantothenate synthetase.